Consider the following 111-residue polypeptide: Resistin-like gamma (111 aa).

An N-terminal signal peptide occupies residues 1 to 23 (MKTAICSLLICIFLLQLMVPVNT). 5 cysteine pairs are disulfide-bonded: Cys55–Cys108, Cys67–Cys107, Cys76–Cys93, Cys78–Cys95, and Cys82–Cys97.

Belongs to the resistin/FIZZ family. Homodimer. Heterodimer with RETNLB. Highly expressed in bone marrow, spleen and white blood cells. Also detected at low levels in thymus, lung, trachea, white adipose tissue, nasal respiratory epithelium, colon, small intestine, kidney, liver, and heart.

It is found in the secreted. Probable hormone. Promotes chemotaxis in myeloid cells. This chain is Resistin-like gamma, found in Rattus norvegicus (Rat).